We begin with the raw amino-acid sequence, 653 residues long: Testicular spindle-associated protein SHCBP1L (653 aa).

A disordered region spans residues 1 to 65; that stretch reads MASGSKASVP…PVKGKAGRET (65 aa). Position 8 is a phosphoserine (Ser8). The span at 28 to 41 shows a compositional bias: polar residues; sequence SAVSGDTAAATTLK. The span at 46–56 shows a compositional bias: low complexity; that stretch reads PVRSVVASPRP. Ser53 is modified (phosphoserine). The stretch at 299 to 326 forms a coiled coil; the sequence is IAQRFKKTLEKYKNKRVELIEYQSNIKE. PbH1 repeat units lie at residues 493–514, 515–537, 538–571, and 574–596; these read SGHMTLENCILKCEGTGVCVLT, GAALTITDSEITGAQGAGVELYP, GSIAILERNEIHHCNNLRTSNSSKSTLGGVNMKV, and APKLKMTNNHIYSNKGYGVSILQ. N6-acetyllysine is present on Lys570. The residue at position 645 (Lys645) is an N6-acetyllysine.

In terms of assembly, interacts with HSPA2; this interaction may promote the recruitment of HSPA2 to the spindle. In terms of tissue distribution, expressed in spermatocytes and elongating spermatids inside the seminiferous tubules (at protein level). Testis-specific.

It is found in the cytoplasm. The protein resides in the cytoskeleton. It localises to the spindle. Its function is as follows. Testis-specific spindle-associated factor that plays a role in spermatogenesis. In association with HSPA2, participates in the maintenance of spindle integrity during meiosis in male germ cells. This is Testicular spindle-associated protein SHCBP1L from Homo sapiens (Human).